The primary structure comprises 259 residues: Adenosylcobinamide-GDP ribazoletransferase (259 aa).

The next 6 membrane-spanning stretches (helical) occupy residues 37 to 57 (ASRYFGLVGTLIGVLSALVYS), 58 to 78 (VMLHWVSPSIAIIFAMIASVL), 118 to 138 (ALALVLCLLLKWQLLSELALF), 143 to 163 (VSLALILGHTLSRVVAASFIF), 195 to 215 (AAISLLLISFMQALVLILGLL), and 237 to 257 (LGATQQIAEVVCYLLLLIVGA).

This sequence belongs to the CobS family. Requires Mg(2+) as cofactor.

The protein localises to the cell inner membrane. The catalysed reaction is alpha-ribazole + adenosylcob(III)inamide-GDP = adenosylcob(III)alamin + GMP + H(+). It carries out the reaction alpha-ribazole 5'-phosphate + adenosylcob(III)inamide-GDP = adenosylcob(III)alamin 5'-phosphate + GMP + H(+). The protein operates within cofactor biosynthesis; adenosylcobalamin biosynthesis; adenosylcobalamin from cob(II)yrinate a,c-diamide: step 7/7. In terms of biological role, joins adenosylcobinamide-GDP and alpha-ribazole to generate adenosylcobalamin (Ado-cobalamin). Also synthesizes adenosylcobalamin 5'-phosphate from adenosylcobinamide-GDP and alpha-ribazole 5'-phosphate. This chain is Adenosylcobinamide-GDP ribazoletransferase, found in Shewanella piezotolerans (strain WP3 / JCM 13877).